A 286-amino-acid polypeptide reads, in one-letter code: MATKLPTTDIRIGAELIRRRKGGVPLVCLTAYTYPVARLLDPHVDLLLVGDSVSMVLHGHATTLGASLGMMIAHGQAVMRGSARACVVVDMPAGSYEDSAAQAVASARRIVDETGCQAVKLEGGVDMAGQIAAIAAAGIPVMGHIGLLPQSVEKDGGYKIKGRTDETVAALMADARAVEKAGAFSVVIEGTIEAVAADITRRIAIPTIGIGASGDCDGQILVIDDMVGLTVDRVPKFVKEYADLRSVIANAAERYAAEVRDRTFPGPSHVFSGSKASSDLNGGDES.

Residues aspartate 51 and aspartate 90 each coordinate Mg(2+). Residues 51 to 52, aspartate 90, and lysine 120 contribute to the 3-methyl-2-oxobutanoate site; that span reads DS. Glutamate 122 contributes to the Mg(2+) binding site. Residue glutamate 189 is the Proton acceptor of the active site. A disordered region spans residues 263–286; it reads TFPGPSHVFSGSKASSDLNGGDES.

This sequence belongs to the PanB family. In terms of assembly, homodecamer; pentamer of dimers. Mg(2+) serves as cofactor.

The protein localises to the cytoplasm. It carries out the reaction 3-methyl-2-oxobutanoate + (6R)-5,10-methylene-5,6,7,8-tetrahydrofolate + H2O = 2-dehydropantoate + (6S)-5,6,7,8-tetrahydrofolate. Its pathway is cofactor biosynthesis; (R)-pantothenate biosynthesis; (R)-pantoate from 3-methyl-2-oxobutanoate: step 1/2. In terms of biological role, catalyzes the reversible reaction in which hydroxymethyl group from 5,10-methylenetetrahydrofolate is transferred onto alpha-ketoisovalerate to form ketopantoate. This Mesorhizobium japonicum (strain LMG 29417 / CECT 9101 / MAFF 303099) (Mesorhizobium loti (strain MAFF 303099)) protein is 3-methyl-2-oxobutanoate hydroxymethyltransferase.